We begin with the raw amino-acid sequence, 163 residues long: Peptide methionine sulfoxide reductase MsrA 1 (163 aa).

Cysteine 21 is an active-site residue.

This sequence belongs to the MsrA Met sulfoxide reductase family.

The enzyme catalyses L-methionyl-[protein] + [thioredoxin]-disulfide + H2O = L-methionyl-(S)-S-oxide-[protein] + [thioredoxin]-dithiol. The catalysed reaction is [thioredoxin]-disulfide + L-methionine + H2O = L-methionine (S)-S-oxide + [thioredoxin]-dithiol. In terms of biological role, has an important function as a repair enzyme for proteins that have been inactivated by oxidation. Catalyzes the reversible oxidation-reduction of methionine sulfoxide in proteins to methionine. In Nostoc sp. (strain PCC 7120 / SAG 25.82 / UTEX 2576), this protein is Peptide methionine sulfoxide reductase MsrA 1 (msrA1).